The following is a 472-amino-acid chain: Argininosuccinate lyase (472 aa).

The protein belongs to the lyase 1 family. Argininosuccinate lyase subfamily.

It is found in the cytoplasm. It carries out the reaction 2-(N(omega)-L-arginino)succinate = fumarate + L-arginine. Its pathway is amino-acid biosynthesis; L-arginine biosynthesis; L-arginine from L-ornithine and carbamoyl phosphate: step 3/3. The polypeptide is Argininosuccinate lyase (Maricaulis maris (strain MCS10) (Caulobacter maris)).